The sequence spans 476 residues: Glucose-1-phosphate adenylyltransferase (476 aa).

Alpha-D-glucose 1-phosphate contacts are provided by residues Tyr-114, Gly-179, Glu-194–Lys-195, and Ser-212.

It belongs to the bacterial/plant glucose-1-phosphate adenylyltransferase family. As to quaternary structure, homotetramer.

The enzyme catalyses alpha-D-glucose 1-phosphate + ATP + H(+) = ADP-alpha-D-glucose + diphosphate. Its pathway is glycan biosynthesis; glycogen biosynthesis. Involved in the biosynthesis of ADP-glucose, a building block required for the elongation reactions to produce glycogen. Catalyzes the reaction between ATP and alpha-D-glucose 1-phosphate (G1P) to produce pyrophosphate and ADP-Glc. In Yersinia pestis bv. Antiqua (strain Antiqua), this protein is Glucose-1-phosphate adenylyltransferase.